The primary structure comprises 251 residues: Acidic leucine-rich nuclear phosphoprotein 32 family member B (251 aa).

3 LRR repeats span residues proline 16 to glutamate 40, asparagine 43 to proline 64, and lysine 65 to alanine 84. At lysine 86 the chain carries N6-acetyllysine. One copy of the LRR 4 repeat lies at asparagine 89 to lysine 110. The LRRCT domain occupies cysteine 123 to glutamate 161. The span at aspartate 149–glutamate 233 shows a compositional bias: acidic residues. Positions aspartate 149–aspartate 251 are disordered. Serine 158 is modified (phosphoserine). Basic and acidic residues predominate over residues glycine 234 to threonine 244. Residues lysine 239–arginine 242 carry the Nuclear localization signal motif. At threonine 244 the chain carries Phosphothreonine.

The protein belongs to the ANP32 family. Interacts with histones H3 and H4. Interacts with KLF5; this interaction induces promoter region-specific histone incorporation and inhibition of histone acetylation by ANP32B. In terms of assembly, (Microbial infection) Interacts with Sendai virus protein M. As to quaternary structure, (Microbial infection) Interacts with Measles virus protein M. (Microbial infection) Interacts with Hendra virus protein M; this interaction promotes nuclear localization of M. In terms of assembly, (Microbial infection) Interacts with influenza virus B protein PB2; this interaction strongly supports influenza B virus replication. Post-translationally, some glutamate residues are glycylated by TTLL8. This modification occurs exclusively on glutamate residues and results in a glycine chain on the gamma-carboxyl group. Directly cleaved by caspase-3/CASP3. In terms of tissue distribution, expressed in heart, lung, pancreas, prostate and in spleen, thymus and placenta.

Its subcellular location is the nucleus. It localises to the cytoplasm. Its function is as follows. Multifunctional protein that is involved in the regulation of many processes including cell proliferation, apoptosis, cell cycle progression or transcription. Regulates the proliferation of neuronal stem cells, differentiation of leukemic cells and progression from G1 to S phase of the cell cycle. As negative regulator of caspase-3-dependent apoptosis, may act as an antagonist of ANP32A in regulating tissue homeostasis. Exhibits histone chaperone properties, able to recruit histones to certain promoters, thus regulating the transcription of specific genes. Also plays an essential role in the nucleocytoplasmic transport of specific mRNAs via the uncommon nuclear mRNA export receptor XPO1/CRM1. Participates in the regulation of adequate adaptive immune responses by acting on mRNA expression and cell proliferation. Functionally, (Microbial infection) Plays an essential role in influenza A and B viral genome replication. Also plays a role in foamy virus mRNA export from the nucleus to the cytoplasm. The chain is Acidic leucine-rich nuclear phosphoprotein 32 family member B (ANP32B) from Homo sapiens (Human).